Here is a 380-residue protein sequence, read N- to C-terminus: MKFTKTALFTVLAATAFAAQAGQYPDLPEGIKAGAGALIGDTVYVGLGGTGTTKFYSLNLKDPKEWKEIAEFPGGKRNQPVAAGVNGKLYVFGGFQDTDVAKNQIINDAYEYNPADNTWTKLSTRSPRSTSVGASVAADGGKIYFVGGVNHEIWNGLFQDVKAAGGDKEKEKAIFDPYFNLRAQDFFFSPEIISYEPANNVWRNEGYFPYSGRAGAAVAIKDGKLLVVNGEVKAGLRSPGTALGTIGKDGVTWKKLGDLPAPTGYDKQDGIAGGMGGYTNGHYIVTGGANFPGALANYEKGIMDAHRTGGLKKTYHKAVYALDGKTGNWKIVGELPATIGYGLAVSYNNKVLLIGGETDGGKPLSAVQTMSYDGKKLTVE.

Positions 1-21 (MKFTKTALFTVLAATAFAAQA) are cleaved as a signal peptide. 7 Kelch repeats span residues 42 to 86 (TVYV…AGVN), 88 to 140 (KLYV…AADG), 142 to 176 (KIYF…AIFD), 177 to 222 (PYFN…AIKD), 225 to 274 (LLVV…IAGG), 296 to 349 (ANYE…SYNN), and 351 to 380 (VLLI…LTVE). Glu-231 (proton acceptor) is an active-site residue.

The protein belongs to the NanM family. In terms of assembly, homodimer.

The protein localises to the periplasm. The enzyme catalyses N-acetyl-alpha-neuraminate = N-acetyl-beta-neuraminate. Converts alpha-N-acetylneuranimic acid (Neu5Ac) to the beta-anomer, accelerating the equilibrium between the alpha- and beta-anomers. Probably facilitates sialidase-negative bacteria to compete successfully for limited amounts of extracellular Neu5Ac, which is likely taken up in the beta-anomer. In addition, the rapid removal of sialic acid from solution might be advantageous to the bacterium to damp down host responses. This Pasteurella multocida (strain Pm70) protein is N-acetylneuraminate epimerase.